We begin with the raw amino-acid sequence, 250 residues long: Triosephosphate isomerase (250 aa).

9 to 11 is a substrate binding site; the sequence is NWK. Histidine 96 functions as the Electrophile in the catalytic mechanism. The active-site Proton acceptor is glutamate 168. Substrate-binding positions include glycine 174, serine 216, and 237–238; that span reads GG.

The protein belongs to the triosephosphate isomerase family. In terms of assembly, homodimer.

The protein localises to the cytoplasm. It carries out the reaction D-glyceraldehyde 3-phosphate = dihydroxyacetone phosphate. It functions in the pathway carbohydrate biosynthesis; gluconeogenesis. The protein operates within carbohydrate degradation; glycolysis; D-glyceraldehyde 3-phosphate from glycerone phosphate: step 1/1. In terms of biological role, involved in the gluconeogenesis. Catalyzes stereospecifically the conversion of dihydroxyacetone phosphate (DHAP) to D-glyceraldehyde-3-phosphate (G3P). This Leptospira borgpetersenii serovar Hardjo-bovis (strain JB197) protein is Triosephosphate isomerase.